The chain runs to 28 residues: Humanin-like 4 (28 aa).

This sequence belongs to the humanin family. As to expression, highly expressed in testis. Also expressed in kidney, heart, skeletal muscles and brain.

It is found in the secreted. It localises to the cytoplasm. Plays a role as a neuroprotective and antiapoptotic factor. The sequence is that of Humanin-like 4 from Homo sapiens (Human).